The primary structure comprises 478 residues: MAAKGISTIGAASRSLSSSLMAAAKEPDVENLRLIEELTSNVDAVQERVLAEILGRNADAEYLDKCGLDASDTDRATFRAKVPVASYDDLKPYVKRIANGDRSPILSTHPIIEFFTSSGTSAGERKLMPIVTDEMARREVLSSLATSVLNVYVPGLHTGKGLYFLFARSETKTPGGLTAQPALTSVYKSEHFKRAYAYTSPMAAILCEDASQSMYAQMLCGLCQRHDVLRVGAVFAAALVRAIRFLQLNWAQLAADIETGELNPRVTDPSDRECSRGDWTGIVTRLWPKTKCLNVVVTGVMAQYIPTLQYYSGGLPIVSGMYASSECFFGLNLRPLCGPSEVSYTIMPNTAYFEFLPVGEAVDASNLVELARVEDGREYEVVVTTYAGLNRYRVGDVLCVTGFHNAAPQFRFVRRQSVLLSIEADKTDEAELQRAVERASSALLRPRGASIVEYTSRACTERVPGHFSPALPHWTLAP.

It belongs to the IAA-amido conjugating enzyme family.

Its function is as follows. May catalyze the synthesis of indole-3-acetic acid (IAA)-amino acid conjugates, providing a mechanism for the plant to cope with the presence of excess auxin. The sequence is that of Putative indole-3-acetic acid-amido synthetase GH3.10 (GH3.10) from Oryza sativa subsp. japonica (Rice).